Reading from the N-terminus, the 235-residue chain is MCMALQPEVSRWDVTPSEAVELQRRLREQLVLRPPPGLKVERIAGADISTEKGKDTGFGGFVVLDVETLAPVAQSEAVVTLHFPYVPGLLSFRELPTIAAAWERLTVRPDVVIFDGQGTAHPRRMGIACHGGLLFGVPSIGCAKSLLVGTHGPLGEARGSTAPLMHRGEVVGMAVRTRKGVQPVYVSPGHLMDLPTAVEWVLKVSPKYREPETTRHAHRLVNALRRADGEAAELE.

Positions 47 and 115 each coordinate Mg(2+).

This sequence belongs to the endonuclease V family. The cofactor is Mg(2+).

The protein resides in the cytoplasm. It catalyses the reaction Endonucleolytic cleavage at apurinic or apyrimidinic sites to products with a 5'-phosphate.. In terms of biological role, DNA repair enzyme involved in the repair of deaminated bases. Selectively cleaves double-stranded DNA at the second phosphodiester bond 3' to a deoxyinosine leaving behind the intact lesion on the nicked DNA. The protein is Endonuclease V of Myxococcus xanthus (strain DK1622).